The primary structure comprises 240 residues: Glutamine transport ATP-binding protein GlnQ (240 aa).

The ABC transporter domain occupies 2 to 236; sequence IEFKNVSKHF…PPSQRLQEFL (235 aa). ATP is bound at residue 34–41; sequence GPSGSGKS.

This sequence belongs to the ABC transporter superfamily. As to quaternary structure, heterotetramer with 2 subunits of GlnQ and 2 subunits of GlnP.

The protein resides in the cell inner membrane. Functionally, part of the binding-protein-dependent transport system for glutamine. Probably responsible for energy coupling to the transport system. This is Glutamine transport ATP-binding protein GlnQ (glnQ) from Escherichia coli (strain K12).